We begin with the raw amino-acid sequence, 276 residues long: Urease accessory protein UreD (276 aa).

It belongs to the UreD family. In terms of assembly, ureD, UreF and UreG form a complex that acts as a GTP-hydrolysis-dependent molecular chaperone, activating the urease apoprotein by helping to assemble the nickel containing metallocenter of UreC. The UreE protein probably delivers the nickel.

Its subcellular location is the cytoplasm. In terms of biological role, required for maturation of urease via the functional incorporation of the urease nickel metallocenter. The polypeptide is Urease accessory protein UreD (Paracidovorax citrulli (strain AAC00-1) (Acidovorax citrulli)).